The following is a 1082-amino-acid chain: CRISPR-associated endonuclease Cas9 (1082 aa).

The active-site For RuvC-like nuclease domain is the D16. The Mg(2+) site is built by D16, E504, and E508. The region spanning 512-667 is the HNH Cas9-type domain; it reads SFKDRKEIEK…DEDGFKERNL (156 aa). H588 functions as the Proton acceptor for HNH nuclease domain in the catalytic mechanism. H723 serves as a coordination point for Mg(2+).

The protein belongs to the CRISPR-associated protein Cas9 family. Subtype II-C subfamily. Monomer. Binds crRNA and tracrRNA. Requires Mg(2+) as cofactor.

Its function is as follows. CRISPR (clustered regularly interspaced short palindromic repeat) is an adaptive immune system that provides protection against mobile genetic elements (viruses, transposable elements and conjugative plasmids). CRISPR clusters contain spacers, sequences complementary to antecedent mobile elements, and target invading nucleic acids. CRISPR clusters are transcribed and processed into CRISPR RNA (crRNA). In type II CRISPR systems correct processing of pre-crRNA requires a trans-encoded small RNA (tracrRNA), endogenous ribonuclease 3 (rnc) and this protein. The tracrRNA serves as a guide for ribonuclease 3-aided processing of pre-crRNA. Subsequently Cas9/crRNA/tracrRNA endonucleolytically cleaves linear or circular dsDNA target complementary to the spacer; Cas9 is inactive in the absence of the 2 guide RNAs (gRNA). Cas9 recognizes the protospacer adjacent motif (PAM) in the CRISPR repeat sequences to help distinguish self versus nonself, as targets within the bacterial CRISPR locus do not have PAMs. PAM recognition is also required for catalytic activity. Cuts target DNA in Cas9:gRNAs mixing experiments with C.jejuni strain NCTC 11168 and P.multocoda strain Pm70. This is CRISPR-associated endonuclease Cas9 from Neisseria meningitidis serogroup A / serotype 4A (strain DSM 15465 / Z2491).